Here is a 683-residue protein sequence, read N- to C-terminus: ATP-dependent zinc metalloprotease FtsH 2 (683 aa).

A compositionally biased stretch (polar residues) spans 1–12 (MADQTSQNDNQN). Positions 1–21 (MADQTSQNDNQNGSGLPGGGP) are disordered. Topologically, residues 1-28 (MADQTSQNDNQNGSGLPGGGPSGTGRGR) are cytoplasmic. Residues 29–49 (LIIWVIAGTLLALWAYSYWGM) traverse the membrane as a helical segment. Over 50–136 (GASGGERISY…VTKPESSFPW (87 aa)) the chain is Periplasmic. A helical transmembrane segment spans residues 137–157 (GLVIMGLLPVLLLFGVGYIFL). The Cytoplasmic portion of the chain corresponds to 158–683 (RRMQSQGQGL…ASGSADASGS (526 aa)). 228–235 (GPPGTGKT) is an ATP binding site. Histidine 450 lines the Zn(2+) pocket. The active site involves glutamate 451. The Zn(2+) site is built by histidine 454 and aspartate 526. The interval 627–683 (VNGDTDEIGHMPTTNGAAASEENGSADDHEPDEATVIEEDGESGEGRASGSADASGS) is disordered. Acidic residues predominate over residues 655–669 (HEPDEATVIEEDGES). Positions 672 to 683 (GRASGSADASGS) are enriched in low complexity.

This sequence in the central section; belongs to the AAA ATPase family. It in the C-terminal section; belongs to the peptidase M41 family. As to quaternary structure, homohexamer. The cofactor is Zn(2+).

It localises to the cell inner membrane. Its function is as follows. Acts as a processive, ATP-dependent zinc metallopeptidase for both cytoplasmic and membrane proteins. Plays a role in the quality control of integral membrane proteins. The chain is ATP-dependent zinc metalloprotease FtsH 2 from Salinibacter ruber (strain M8).